The following is a 365-amino-acid chain: MGVPRPQPWALGLLLFLLPGSLGAESHLSLLYHLTAVSSPAPGTPAFWVSGWLGPQQYLSYNSLRGEAEPCGAWVWENQVSWYWEKETTDLRIKEKLFLEAFKALGGKGPYTLQGLLGCELGPDNTSVPTAKFALNGEEFMNFDLKQGTWGGDWPEALAISQRWQQQDKAANKELTFLLFSCPHRLREHLERGRGNLEWKEPPSMRLKARPSSPGFSVLTCSAFSFYPPELQLRFLRNGLAAGTGQGDFGPNSDGSFHASSSLTVKSGDEHHYCCIVQHAGLAQPLRVELESPAKSSVLVVGIVIGVLLLTAAAVGGALLWRRMRSGLPAPWISLRGDDTGVLLPTPGEAQDADLKDVNVIPATA.

An N-terminal signal peptide occupies residues 1-23 (MGVPRPQPWALGLLLFLLPGSLG). The segment at 24-110 (AESHLSLLYH…AFKALGGKGP (87 aa)) is alpha-1. The Extracellular segment spans residues 24–297 (AESHLSLLYH…VELESPAKSS (274 aa)). An alpha-2 region spans residues 111-200 (YTLQGLLGCE…ERGRGNLEWK (90 aa)). 2 disulfides stabilise this stretch: C119-C182 and C221-C275. A glycan (N-linked (GlcNAc...) asparagine) is linked at N125. The tract at residues 201–290 (EPPSMRLKAR…GLAQPLRVEL (90 aa)) is alpha-3. The region spanning 202–289 (PPSMRLKARP…AGLAQPLRVE (88 aa)) is the Ig-like C1-type domain. The segment at 291–297 (ESPAKSS) is connecting peptide. The chain crosses the membrane as a helical span at residues 298-321 (VLVVGIVIGVLLLTAAAVGGALLW). Residues 322-365 (RRMRSGLPAPWISLRGDDTGVLLPTPGEAQDADLKDVNVIPATA) lie on the Cytoplasmic side of the membrane. At S334 the chain carries Phosphoserine.

This sequence belongs to the immunoglobulin superfamily. As to quaternary structure, fcRn complex consists of two subunits: p51, and p14 which is equivalent to beta-2-microglobulin. It forms an MHC class I-like heterodimer. Interacts with albumin/ALB; this interaction regulates ALB homeostasis. (Microbial infection) Interacts with Echovirus 6, Echovirus 11 and Echovirus 30 capsid protein VP1. Expressed in full-term placenta, heart, lung, liver, muscle, kidney, pancreas, and both fetal and adult small intestine.

The protein localises to the cell membrane. It is found in the endosome membrane. In terms of biological role, cell surface receptor that transfers passive humoral immunity from the mother to the newborn. Binds to the Fc region of monomeric immunoglobulin gamma and mediates its selective uptake from milk. IgG in the milk is bound at the apical surface of the intestinal epithelium. The resultant FcRn-IgG complexes are transcytosed across the intestinal epithelium and IgG is released from FcRn into blood or tissue fluids. Throughout life, contributes to effective humoral immunity by recycling IgG and extending its half-life in the circulation. Mechanistically, monomeric IgG binding to FcRn in acidic endosomes of endothelial and hematopoietic cells recycles IgG to the cell surface where it is released into the circulation. In addition of IgG, regulates homeostasis of the other most abundant circulating protein albumin/ALB. Its function is as follows. (Microbial infection) Acts as an uncoating receptor for a panel of echoviruses including Echovirus 5, 6, 7, 9, 11, 13, 25 and 29. The polypeptide is IgG receptor FcRn large subunit p51 (FCGRT) (Homo sapiens (Human)).